Here is a 328-residue protein sequence, read N- to C-terminus: Gonadotropin-releasing hormone receptor (328 aa).

Residues 1–38 (MQDDTSSEQNPTHCSAINSSVPLVQGALPTLTLSGKIR) lie on the Extracellular side of the membrane. The N-linked (GlcNAc...) asparagine glycan is linked to Asn-18. The chain crosses the membrane as a helical span at residues 39 to 59 (VTVTFFLFLVSTTLNASFLLK). Topologically, residues 60–84 (LQKWTQKKEKGKKLSRMKVLLKHLT) are cytoplasmic. Residues 85 to 105 (LANLLETLIVMPLDGMWNITV) form a helical membrane-spanning segment. Over 106 to 115 (QWYAGELLCK) the chain is Extracellular. A disulfide bond links Cys-114 and Cys-196. The chain crosses the membrane as a helical span at residues 116–136 (ILSYLKLFSMYAPAFMMVVIS). Topologically, residues 137–160 (LDRSMAITRPLPVQSNRKLEQSMT) are cytoplasmic. A helical transmembrane segment spans residues 161-181 (GLAWGLSSVLAGPQLYIFKMI). Topologically, residues 182–208 (HLENGPGQTEVFSQCVTHCSFPQWWHQ) are extracellular. Residues 209-229 (AFYNFFTFICLFIIPLLIMLI) form a helical membrane-spanning segment. Topologically, residues 230–271 (CNAKIIFTLTQVLQQDSNKLQLNQSKNNIPRARLRTLKMTVA) are cytoplasmic. A helical membrane pass occupies residues 272-292 (FAASFIVCWTPYYVLGLWYWF). At 293–306 (DPGMLHRMSEPVNH) the chain is on the extracellular side. A helical transmembrane segment spans residues 307-327 (FFFLFAFLNPCFDPLIYGYFS). Position 328 (Leu-328) is a topological domain, cytoplasmic.

It belongs to the G-protein coupled receptor 1 family.

It is found in the cell membrane. Functionally, receptor for gonadotropin releasing hormone (GnRH) that mediates the action of GnRH to stimulate the secretion of the gonadotropic hormones luteinizing hormone (LH) and follicle-stimulating hormone (FSH). This receptor mediates its action by association with G-proteins that activate a phosphatidylinositol-calcium second messenger system. The polypeptide is Gonadotropin-releasing hormone receptor (GNRHR) (Cavia porcellus (Guinea pig)).